Reading from the N-terminus, the 472-residue chain is Sodium-coupled neutral amino acid transporter 5 (472 aa).

The residue at position 1 (Met-1) is an N-acetylmethionine. The Cytoplasmic segment spans residues 1–48; the sequence is MELQDPKMNGALPSDAVGYRQEREGFLPSRGPAPGSKPVQFMDFEGKT. Residues 49-71 form a helical membrane-spanning segment; it reads SFGMSVFNLSNAIMGSGILGLAY. Over 72 to 87 the chain is Extracellular; it reads AMAHTGVIFFLALLLC. Residues 88–108 traverse the membrane as a helical segment; it reads IALLSSYSIHLLLTCAGIAGI. Residues 109 to 125 are Cytoplasmic-facing; it reads RAYEQLGQRAFGPAGKV. Residues 126 to 146 traverse the membrane as a helical segment; that stretch reads VVATVICLHNVGAMSSYLFII. The Extracellular portion of the chain corresponds to 147–166; it reads KSELPLVIGTFLYMDPEGDW. A helical transmembrane segment spans residues 167–187; it reads FLKGNLLIIIVSVLIILPLAL. The Cytoplasmic segment spans residues 188–192; it reads MKHLG. A helical membrane pass occupies residues 193 to 213; the sequence is YLGYTSGLSLTCMLFFLVSVI. At 214-257 the chain is on the extracellular side; sequence YKKFQLGCAIGHNETAMESEALVGLPSQGLNSSCEAQMFTVDSQ. The cysteines at positions 221 and 247 are disulfide-linked. Residue Asn-226 is glycosylated (N-linked (GlcNAc...) asparagine). The helical transmembrane segment at 258–278 threads the bilayer; it reads MSYTVPIMAFAFVCHPEVLPI. Residues 279-295 lie on the Cytoplasmic side of the membrane; it reads YTELCRPSKRRMQAVAN. Residues 296–316 traverse the membrane as a helical segment; it reads VSIGAMFCMYGLTATFGYLTF. Topologically, residues 317–334 are extracellular; it reads YSSVKAEMLHMYSQKDPL. Residues 335-355 traverse the membrane as a helical segment; that stretch reads ILCVRLAVLLAVTLTVPVVLF. Residues 356–376 lie on the Cytoplasmic side of the membrane; that stretch reads PIRRALQQLLFPGKAFSWPRH. A helical membrane pass occupies residues 377 to 397; sequence VAIALILLVLVNVLVICVPTI. At 398-399 the chain is on the extracellular side; sequence RD. A helical transmembrane segment spans residues 400-420; sequence IFGVIGSTSAPSLIFILPSIF. Residues 421–439 are Cytoplasmic-facing; the sequence is YLRIVPSEVEPFLSWPKIQ. A helical membrane pass occupies residues 440 to 460; sequence ALCFGVLGVLFMAVSLGFMFA. Residues 461 to 472 are Extracellular-facing; that stretch reads NWATGQSRMSGH.

The protein belongs to the amino acid/polyamine transporter 2 family. Predominantly expressed in stomach, brain, liver, lung and intestinal tract.

It is found in the cell membrane. It catalyses the reaction L-serine(out) + Na(+)(out) + H(+)(in) = L-serine(in) + Na(+)(in) + H(+)(out). It carries out the reaction L-alanine(out) + Na(+)(out) + H(+)(in) = L-alanine(in) + Na(+)(in) + H(+)(out). The catalysed reaction is glycine(out) + Na(+)(out) + H(+)(in) = glycine(in) + Na(+)(in) + H(+)(out). The enzyme catalyses L-glutamine(out) + Na(+)(out) + H(+)(in) = L-glutamine(in) + Na(+)(in) + H(+)(out). It catalyses the reaction L-asparagine(out) + Na(+)(out) + H(+)(in) = L-asparagine(in) + Na(+)(in) + H(+)(out). It carries out the reaction L-histidine(out) + Na(+)(out) + H(+)(in) = L-histidine(in) + Na(+)(in) + H(+)(out). The catalysed reaction is L-cysteine(out) + Na(+)(out) + H(+)(in) = L-cysteine(in) + Na(+)(in) + H(+)(out). Not inhibited by lithium. Partial allosteric regulation on ions sodium binding. Symporter that cotransports neutral amino acids and sodium ions, coupled to an H(+) antiporter activity. Releases L-glutamine and glycine from astroglial cells and may participate in the glutamate/GABA-L-glutamine cycle and the NMDA receptors activation. In addition, contributes significantly to L-glutamine uptake in retina, namely in ganglion and Mueller cells therefore, participates in the retinal glutamate-glutamine cycle. The transport activity is pH sensitive and Li(+) tolerant. Moreover functions in both direction and is associated with large uncoupled fluxes of protons. The transport is electroneutral coupled to the cotransport of 1 Na(+) and the antiport of 1 H(+). May have a particular importance for modulation of net hepatic glutamine flux. This is Sodium-coupled neutral amino acid transporter 5 (SLC38A5) from Homo sapiens (Human).